The sequence spans 435 residues: MFILTMGLNHHTAPIDIREKLVFKETEEEMALVTLLQEKSILENVIISTCNRTEIVAVVDQIHTGRYYLKRFMANWFQMDMEKIEPYLFFHEEAEAVNHLYKVTAGLDSLVLGETQILGQVKHAFEIAKQTGTTGTLLNKLFREVVTFAKKVHHHTKINENAVSVSYAAVEVAKKLYGSLDNKKIVLIGAGEMSELALQNLAGSGIADITIINRTKSNAEILAHQFQAKVGAYENMSDHLLEADIVLVSTSAEEPIIKQVAMQELMEQKASSMLVIDIGLPRNVEHDCSYIPNFHLYDIDDLAGVVSANSLERQRIVQELENTIETEVRSFFEWEKQLGVVPVIRALREKALDMQEVTMTSLENKLPGLTEREYIQIGKHMKSIINQMLKQPISELKEMSVEENADTSIEHFKRIFGLTETDVAIIEKEQAETRS.

Substrate is bound by residues 49–52, S109, 114–116, and Q120; these read TCNR and ETQ. The active-site Nucleophile is the C50. 189–194 contacts NADP(+); that stretch reads GAGEMS.

The protein belongs to the glutamyl-tRNA reductase family. Homodimer.

The enzyme catalyses (S)-4-amino-5-oxopentanoate + tRNA(Glu) + NADP(+) = L-glutamyl-tRNA(Glu) + NADPH + H(+). It functions in the pathway porphyrin-containing compound metabolism; protoporphyrin-IX biosynthesis; 5-aminolevulinate from L-glutamyl-tRNA(Glu): step 1/2. Functionally, catalyzes the NADPH-dependent reduction of glutamyl-tRNA(Glu) to glutamate 1-semialdehyde (GSA). This is Glutamyl-tRNA reductase from Listeria innocua serovar 6a (strain ATCC BAA-680 / CLIP 11262).